The chain runs to 1399 residues: MSNSVVHNLLNRGLIRPLNFEHQNKLNSSVYQTSTANPALGKIGRSKLYGKGLKQAGRSLVTETGGRPLSFVPRAVLAMDPQAAEKFSLDGNIDLLVEVTSTTVREVNIQIAYTSDTLFLHWGAILDNKENWVLPSRSPDRTQNFKNSALRTPFVKSGGNSHLKLEIDDPAIHAIEFLIFDESRNKWYKNNGQNFHINLPTERNVKQNVSVPEDLVQIQAYLRWERKGKQMYNPEKEKEEYEAARTELREEMMRGASVEDLRAKLLKKDNSNESPKSNGTSSSGREEKKKVSKQPERKKNYNTDKIQRKGRDLTKLIYKHVADFVEPESKSSSEPRSLTTLEIYAKAKEEQETTPVFSKKTFKLEGSAILVFVTKLSGKTKIHVATDFKEPVTLHWALSQKGGEWLDPPSDILPPNSLPVRGAVDTKLTITSTDLPSPVQTFELEIEGDSYKGMPFVLNAGERWIKNNDSDFYVDFAKEEKHVQKDYGDGKGTAKHLLDKIADLESEAQKSFMHRFNIAADLVDEAKSAGQLGFAGILVWMRFMATRQLVWNKNYNVKPREISKAQDRLTDLLQDVYASYPEYRELLRMIMSTVGRGGEGDVGQRIRDEILVIQRKNDCKGGIMEEWHQKLHNNTSPDDVVICQALMDYIKSDFDLSVYWKTLNDNGITKERLLSYDRAIHSEPNFRGEQKDGLLRDLGHYMRTLKAVHSGADLESAIQNCMGYQDDGEGFMVGVQINPVSGLPSGYPDLLRFVLEHVEEKNVEPLLEGLLEARQELRPLLLKSHDRLKDLLFLDLALDSTVRTAIERGYEQLNDAGPEKIMYFISLVLENLALSSDDNEDLIYCLKGWQFALDMCKSKKDHWALYAKSVLDRSRLALASKAERYLEILQPSAEYLGSCLGVDQSAVSIFTEEIIRAGSAAALSSLVNRLDPVLRKTANLGSWQVISPVEVVGYVIVVDELLTVQNKTYDRPTIIVANRVRGEEEIPDGAVAVLTPDMPDVLSHVSVRARNGKICFATCFDSGILSDLQGKDGKLLSLQPTSADVVYKEVNDSELSSPSSDNLEDAPPSISLVKKQFAGRYAISSEEFTSDLVGAKSRNIGYLKGKVPSWVGIPTSVALPFGVFEKVISEKANQAVNDKLLVLKKTLDEGDQGALKEIRQTLLGLVAPPELVEELKSTMKSSDMPWPGDEGEQRWEQAWAAIKKVWASKWNERAYFSTRKVKLDHDYLCMAVLVQEVINADYAFVIHTTNPSSGDSSEIYAEVVKGLGETLVGAYPGRSLSFICKKNNLDSPLVLGYPSKPIGLFIRRSIIFRSDSNGEDLEGYAGAGLYDSVPMDEEDQVVLDYTTDPLITDLSFQKKVLSDIARAGDAIEKLYGTAQDIEGVIRDGKLYVVQTRPQV.

A chloroplast-targeting transit peptide spans Met-1 to Ala-75. Val-76 carries the post-translational modification N-acetylvaline. Residues Leu-265–Ile-306 are disordered. The span at Asn-272–Ser-283 shows a compositional bias: polar residues. Residues Gly-284–Ile-306 show a composition bias toward basic and acidic residues. His-1004 functions as the Tele-phosphohistidine intermediate in the catalytic mechanism.

Belongs to the PEP-utilizing enzyme family. In terms of assembly, homodimer. The cofactor is Mg(2+).

Its subcellular location is the plastid. It is found in the chloroplast. It catalyses the reaction [(1-&gt;4)-alpha-D-glucosyl](n) + n ATP + n H2O = [(1-&gt;4)-6-phospho-alpha-D-glucosyl](n) + n AMP + n phosphate + 2n H(+). In terms of biological role, mediates the incorporation of phosphate into starch-like alpha-glucan, mostly at the C-6 position of glucose units. Acts as an overall regulator of starch mobilization. Required for starch degradation, suggesting that the phosphate content of starch regulates its degradability. This chain is Alpha-glucan water dikinase 1, chloroplastic, found in Arabidopsis thaliana (Mouse-ear cress).